Consider the following 155-residue polypeptide: Large ribosomal subunit protein uL16 (155 aa).

Belongs to the universal ribosomal protein uL16 family. As to quaternary structure, part of the 50S ribosomal subunit.

Binds 23S rRNA and is also seen to make contacts with the A and possibly P site tRNAs. This Synechococcus sp. (strain CC9311) protein is Large ribosomal subunit protein uL16.